Consider the following 435-residue polypeptide: Tumor necrosis factor receptor superfamily member 3 (435 aa).

A signal peptide spans 1–30; it reads MLLPWATSAPGLAWGPLVLGLFGLLAASQP. Residues 31–227 lie on the Extracellular side of the membrane; sequence QAVPPYASEN…PPEMSGTMLM (197 aa). N-linked (GlcNAc...) asparagine glycosylation is present at N40. 4 TNFR-Cys repeats span residues 42–81, 82–124, 125–168, and 169–211; these read TCRDQEKEYYEPQHRICCSRCPPGTYVSAKCSRIRDTVCA, TCAE…KTQC, RCQP…NHCV, and PCKA…TTCK. Cystine bridges form between C43/C58, C59/C72, C62/C80, C83/C98, C101/C116, C104/C124, C126/C132, C139/C148, C142/C167, and C170/C185. N-linked (GlcNAc...) asparagine glycosylation is present at N177. The chain crosses the membrane as a helical span at residues 228–248; that stretch reads LAVLLPLAFFLLLATVFSCIW. Residues 249–435 are Cytoplasmic-facing; that stretch reads KSHPSLCRKL…GPRNQFITHD (187 aa). Residue S323 is modified to Phosphoserine. Pro residues predominate over residues 373-399; it reads PGPGDLPATPEPPYPIPEEGDPGPPGL. The segment at 373-435 is disordered; that stretch reads PGPGDLPATP…GPRNQFITHD (63 aa). The segment covering 403–417 has biased composition (basic and acidic residues); sequence HQEDGKAWHLAETEH. Over residues 421-435 the composition is skewed to polar residues; the sequence is TPSNRGPRNQFITHD.

Self-associates; dimerization and trimerization are promoted by lymphotoxin (LTA(1)-LTB(2)). Associates with TRAF3. Associates with TRAF4. Associates with TRAF5. Interacts with Aedes aegypti lymphotoxin beta receptor inhibitor; the interaction reduces dimerization and trimerization of LTBR induced by lymphotoxin (LTA(1)-LTB(2)). As to quaternary structure, (Microbial infection) Interacts with HCV core protein.

Its subcellular location is the membrane. Receptor for the heterotrimeric lymphotoxin containing LTA and LTB, and for TNFS14/LIGHT. Activates NF-kappa-B signaling pathway upon stimulation with lymphotoxin (LTA(1)-LTB(2)). Promotes apoptosis via TRAF3 and TRAF5. May play a role in the development of lymphoid organs. The sequence is that of Tumor necrosis factor receptor superfamily member 3 (LTBR) from Homo sapiens (Human).